The sequence spans 586 residues: Proline--tRNA ligase (586 aa).

This sequence belongs to the class-II aminoacyl-tRNA synthetase family. ProS type 1 subfamily. Homodimer.

It localises to the cytoplasm. The enzyme catalyses tRNA(Pro) + L-proline + ATP = L-prolyl-tRNA(Pro) + AMP + diphosphate. Functionally, catalyzes the attachment of proline to tRNA(Pro) in a two-step reaction: proline is first activated by ATP to form Pro-AMP and then transferred to the acceptor end of tRNA(Pro). As ProRS can inadvertently accommodate and process non-cognate amino acids such as alanine and cysteine, to avoid such errors it has two additional distinct editing activities against alanine. One activity is designated as 'pretransfer' editing and involves the tRNA(Pro)-independent hydrolysis of activated Ala-AMP. The other activity is designated 'posttransfer' editing and involves deacylation of mischarged Ala-tRNA(Pro). The misacylated Cys-tRNA(Pro) is not edited by ProRS. In Leptospira biflexa serovar Patoc (strain Patoc 1 / Ames), this protein is Proline--tRNA ligase.